Reading from the N-terminus, the 401-residue chain is Probable tRNA sulfurtransferase (401 aa).

The 106-residue stretch at 60–165 (EPIIDKLKTV…QDGTYVTCHD (106 aa)) folds into the THUMP domain. Residues 183–184 (ML), 208–209 (HF), Arg-265, Gly-287, and Gln-296 contribute to the ATP site.

This sequence belongs to the ThiI family.

It is found in the cytoplasm. The catalysed reaction is [ThiI sulfur-carrier protein]-S-sulfanyl-L-cysteine + a uridine in tRNA + 2 reduced [2Fe-2S]-[ferredoxin] + ATP + H(+) = [ThiI sulfur-carrier protein]-L-cysteine + a 4-thiouridine in tRNA + 2 oxidized [2Fe-2S]-[ferredoxin] + AMP + diphosphate. The enzyme catalyses [ThiS sulfur-carrier protein]-C-terminal Gly-Gly-AMP + S-sulfanyl-L-cysteinyl-[cysteine desulfurase] + AH2 = [ThiS sulfur-carrier protein]-C-terminal-Gly-aminoethanethioate + L-cysteinyl-[cysteine desulfurase] + A + AMP + 2 H(+). Its pathway is cofactor biosynthesis; thiamine diphosphate biosynthesis. Functionally, catalyzes the ATP-dependent transfer of a sulfur to tRNA to produce 4-thiouridine in position 8 of tRNAs, which functions as a near-UV photosensor. Also catalyzes the transfer of sulfur to the sulfur carrier protein ThiS, forming ThiS-thiocarboxylate. This is a step in the synthesis of thiazole, in the thiamine biosynthesis pathway. The sulfur is donated as persulfide by IscS. The protein is Probable tRNA sulfurtransferase of Geobacillus thermodenitrificans (strain NG80-2).